Consider the following 207-residue polypeptide: LexA repressor (207 aa).

A DNA-binding region (H-T-H motif) is located at residues 28 to 48; that stretch reads RAEIARRLGFKSPNAAEEHLK. Catalysis depends on for autocatalytic cleavage activity residues S126 and K163.

It belongs to the peptidase S24 family. Homodimer.

The catalysed reaction is Hydrolysis of Ala-|-Gly bond in repressor LexA.. Functionally, represses a number of genes involved in the response to DNA damage (SOS response), including recA and lexA. In the presence of single-stranded DNA, RecA interacts with LexA causing an autocatalytic cleavage which disrupts the DNA-binding part of LexA, leading to derepression of the SOS regulon and eventually DNA repair. The chain is LexA repressor from Marinomonas sp. (strain MWYL1).